Reading from the N-terminus, the 493-residue chain is Glutamate--tRNA ligase (493 aa).

The short motif at 10 to 20 is the 'HIGH' region element; that stretch reads PSPTGDPHVGT. The 'KMSKS' region motif lies at 251 to 255; the sequence is KLSKR. Residue K254 coordinates ATP.

It belongs to the class-I aminoacyl-tRNA synthetase family. Glutamate--tRNA ligase type 1 subfamily. In terms of assembly, monomer.

It localises to the cytoplasm. The catalysed reaction is tRNA(Glu) + L-glutamate + ATP = L-glutamyl-tRNA(Glu) + AMP + diphosphate. Its function is as follows. Catalyzes the attachment of glutamate to tRNA(Glu) in a two-step reaction: glutamate is first activated by ATP to form Glu-AMP and then transferred to the acceptor end of tRNA(Glu). This Pseudomonas putida (strain ATCC 47054 / DSM 6125 / CFBP 8728 / NCIMB 11950 / KT2440) protein is Glutamate--tRNA ligase.